A 930-amino-acid chain; its full sequence is Translation initiation factor IF-2 (930 aa).

A compositionally biased stretch (low complexity) spans 50-67 (FKPAAAPKVEAKPAAPKV). Disordered regions lie at residues 50–217 (FKPA…SSEE) and 260–346 (EVVP…HELP). Basic and acidic residues-rich tracts occupy residues 68–90 (SAEKKAEKSEPAKPAVAKEEAKP) and 110–125 (FKAEREARAKEQAERR). The segment covering 129–141 (KGNNRDQQQNGNR) has biased composition (low complexity). Composition is skewed to basic and acidic residues over residues 157–167 (RDNRRFNDQAK) and 262–295 (VPEKKEPAVDTRRKKQARPDKNRDDYDHEEDGPR). The segment covering 309 to 318 (NQKNSNWNNN) has biased composition (low complexity). The segment covering 337–346 (VTERKFHELP) has biased composition (basic and acidic residues). The tr-type G domain occupies 432-599 (ERPPVVTIMG…TVLLVAEIQE (168 aa)). The segment at 441 to 448 (GHVDHGKT) is G1. GTP is bound at residue 441–448 (GHVDHGKT). A G2 region spans residues 466-470 (GITQH). The segment at 487–490 (DTPG) is G3. Residues 487 to 491 (DTPGH) and 541 to 544 (NKID) each bind GTP. Positions 541 to 544 (NKID) are G4. Residues 577 to 579 (SAK) form a G5 region.

The protein belongs to the TRAFAC class translation factor GTPase superfamily. Classic translation factor GTPase family. IF-2 subfamily.

The protein localises to the cytoplasm. In terms of biological role, one of the essential components for the initiation of protein synthesis. Protects formylmethionyl-tRNA from spontaneous hydrolysis and promotes its binding to the 30S ribosomal subunits. Also involved in the hydrolysis of GTP during the formation of the 70S ribosomal complex. The sequence is that of Translation initiation factor IF-2 from Streptococcus pneumoniae (strain ATCC 700669 / Spain 23F-1).